The primary structure comprises 317 residues: uncharacterized protein (317 aa).

The segment covering 1–11 (MASAGAERRPG) has biased composition (basic and acidic residues). Residues 1–164 (MASAGAERRP…KAKKRKSLGA (164 aa)) form a disordered region. A compositionally biased stretch (polar residues) spans 19–34 (GQGQLTEEPGSAQTSE). Basic and acidic residues-rich tracts occupy residues 47–58 (HEARGTQSEDQR) and 71–92 (EGPK…ERGP). Basic residues-rich tracts occupy residues 100-110 (RPRHGPKRKPV) and 151-161 (KQHKKAKKRKS).

This is an uncharacterized protein from Homo sapiens (Human).